The following is a 98-amino-acid chain: NADH-ubiquinone oxidoreductase chain 4L (98 aa).

3 consecutive transmembrane segments (helical) span residues 1–21 (MSSY…GILL), 24–44 (LHLL…FIWI), and 61–81 (LILL…MVAL).

Belongs to the complex I subunit 4L family.

It localises to the mitochondrion membrane. It catalyses the reaction a ubiquinone + NADH + 5 H(+)(in) = a ubiquinol + NAD(+) + 4 H(+)(out). Core subunit of the mitochondrial membrane respiratory chain NADH dehydrogenase (Complex I) that is believed to belong to the minimal assembly required for catalysis. Complex I functions in the transfer of electrons from NADH to the respiratory chain. The immediate electron acceptor for the enzyme is believed to be ubiquinone. The polypeptide is NADH-ubiquinone oxidoreductase chain 4L (ND4L) (Pisaster ochraceus (Ochre sea star)).